A 747-amino-acid chain; its full sequence is MTLITRVLNSNLPLRLSALKTVRQLQCGYSSHAKYAEHKPIERIRNIGISAHIDSGKTTLTERILFYTGRIAEMHEVRGKDNVGATMDSMELERQRGITIQSAATYTLWKDTNINIIDTPGHVDFTVEVERALRVLDGAVLVLCAVGGVQSQTLTVNRQMKRYNVPCLAFINKLDRLGSNPYRVLSQMRSKLNHNAAFIQLPIGVESNCKGIVDLVQERAIYFEGEHGMDLRLDEIPQDMRVESQERRQELIEHLSNADETLGELFLEEKPFTEADIKAALRRTCIKRTFTPVLVGTALKNKGVQPLLDAIIDYLPNPGEVENLAYIEQEGKEKQQVVLNPARDGKDPFMGLAFKLEAGRFGQLTYLRCYQGVLRKGDNIFNARTNKKVRIARLVRLHSNQMEDVNEVYAGDIFALFGVDCASGDTFTTNPKNHMAMESIFVPEPVVSMAIKPNNTKDRDNFSKAIARFTKEDPTFHFYFDNDVKETLVSGMGELHLEIYAQRMEREYGCPVTLGKPKVAFRETLVGPCEFDYLHKKQSGGSGQYARIIGLMEPLPPNQNTLLEFVDETVGTNVPKQFVPGVEKGFREMSERGMLSGHKLSGVRFRLQDGGHHIVDSSELAFMLAAHGAIKEVFQNGSWQILEPIMLVEVTAPEEFQGAVMGHLSKRHGIITGTEGTEGWFTVYAEVPLNDMFGYASELRSSTQGKGEFTMEYSRYSPCLPEVQEQVVRQYQESQGLGQPEKKKKKN.

A mitochondrion-targeting transit peptide spans 1–32 (MTLITRVLNSNLPLRLSALKTVRQLQCGYSSH). One can recognise a tr-type G domain in the interval 42–319 (ERIRNIGISA…AIIDYLPNPG (278 aa)). Residues 51 to 58 (AHIDSGKT), 118 to 122 (DTPGH), and 172 to 175 (NKLD) contribute to the GTP site.

It belongs to the TRAFAC class translation factor GTPase superfamily. Classic translation factor GTPase family. EF-G/EF-2 subfamily.

It is found in the mitochondrion. It functions in the pathway protein biosynthesis; polypeptide chain elongation. Its function is as follows. Mitochondrial GTPase that catalyzes the GTP-dependent ribosomal translocation step during translation elongation. During this step, the ribosome changes from the pre-translocational (PRE) to the post-translocational (POST) state as the newly formed A-site-bound peptidyl-tRNA and P-site-bound deacylated tRNA move to the P and E sites, respectively. Catalyzes the coordinated movement of the two tRNA molecules, the mRNA and conformational changes in the ribosome. Essential during development as it acts as a retrograde signal from mitochondria to the nucleus to slow down cell proliferation if mitochondrial energy output is low. This is Elongation factor G, mitochondrial from Drosophila virilis (Fruit fly).